The chain runs to 554 residues: Glutamine--tRNA ligase (554 aa).

The short motif at 34–44 (PEPNGYLHIGH) is the 'HIGH' region element. ATP-binding positions include 35 to 37 (EPN) and 41 to 47 (HIGHAKS). The L-glutamine site is built by aspartate 67 and tyrosine 212. ATP is bound by residues threonine 231, 261-262 (RL), and 269-271 (MSK). Residues 268-272 (VMSKR) carry the 'KMSKS' region motif. Positions 317 to 324 (TKQDNTIE) are interaction with tRNA.

The protein belongs to the class-I aminoacyl-tRNA synthetase family. Monomer.

It is found in the cytoplasm. The enzyme catalyses tRNA(Gln) + L-glutamine + ATP = L-glutaminyl-tRNA(Gln) + AMP + diphosphate. The protein is Glutamine--tRNA ligase of Escherichia coli O127:H6 (strain E2348/69 / EPEC).